Here is a 240-residue protein sequence, read N- to C-terminus: UDP-2,3-diacylglucosamine hydrolase (240 aa).

Mn(2+) is bound by residues D8, H10, D41, N78, and H113. 78–79 (NR) contacts substrate. Substrate is bound by residues D121, S159, N163, K166, and H194. Mn(2+) contacts are provided by H194 and H196.

This sequence belongs to the LpxH family. Mn(2+) is required as a cofactor.

The protein localises to the cell inner membrane. The catalysed reaction is UDP-2-N,3-O-bis[(3R)-3-hydroxytetradecanoyl]-alpha-D-glucosamine + H2O = 2-N,3-O-bis[(3R)-3-hydroxytetradecanoyl]-alpha-D-glucosaminyl 1-phosphate + UMP + 2 H(+). The protein operates within glycolipid biosynthesis; lipid IV(A) biosynthesis; lipid IV(A) from (3R)-3-hydroxytetradecanoyl-[acyl-carrier-protein] and UDP-N-acetyl-alpha-D-glucosamine: step 4/6. In terms of biological role, hydrolyzes the pyrophosphate bond of UDP-2,3-diacylglucosamine to yield 2,3-diacylglucosamine 1-phosphate (lipid X) and UMP by catalyzing the attack of water at the alpha-P atom. Involved in the biosynthesis of lipid A, a phosphorylated glycolipid that anchors the lipopolysaccharide to the outer membrane of the cell. In Shewanella baltica (strain OS195), this protein is UDP-2,3-diacylglucosamine hydrolase.